The following is a 196-amino-acid chain: Imidazole glycerol phosphate synthase subunit HisH (196 aa).

One can recognise a Glutamine amidotransferase type-1 domain in the interval 2–196 (DVVILDTGCA…AQLMKNFLEM (195 aa)). The Nucleophile role is filled by cysteine 77. Catalysis depends on residues histidine 178 and glutamate 180.

In terms of assembly, heterodimer of HisH and HisF.

Its subcellular location is the cytoplasm. The catalysed reaction is 5-[(5-phospho-1-deoxy-D-ribulos-1-ylimino)methylamino]-1-(5-phospho-beta-D-ribosyl)imidazole-4-carboxamide + L-glutamine = D-erythro-1-(imidazol-4-yl)glycerol 3-phosphate + 5-amino-1-(5-phospho-beta-D-ribosyl)imidazole-4-carboxamide + L-glutamate + H(+). The enzyme catalyses L-glutamine + H2O = L-glutamate + NH4(+). Its pathway is amino-acid biosynthesis; L-histidine biosynthesis; L-histidine from 5-phospho-alpha-D-ribose 1-diphosphate: step 5/9. Its function is as follows. IGPS catalyzes the conversion of PRFAR and glutamine to IGP, AICAR and glutamate. The HisH subunit catalyzes the hydrolysis of glutamine to glutamate and ammonia as part of the synthesis of IGP and AICAR. The resulting ammonia molecule is channeled to the active site of HisF. The chain is Imidazole glycerol phosphate synthase subunit HisH from Yersinia pestis.